We begin with the raw amino-acid sequence, 389 residues long: Succinate--CoA ligase [ADP-forming] subunit beta (389 aa).

The 236-residue stretch at 9–244 (KELLRQFNVP…IDEEDAAEIE (236 aa)) folds into the ATP-grasp domain. Residues lysine 46, 53 to 55 (GRG), glutamate 99, alanine 102, and glutamate 107 each bind ATP. Mg(2+) contacts are provided by asparagine 199 and aspartate 213. Residues asparagine 264 and 321-323 (GIM) each bind substrate.

This sequence belongs to the succinate/malate CoA ligase beta subunit family. Heterotetramer of two alpha and two beta subunits. Mg(2+) is required as a cofactor.

It carries out the reaction succinate + ATP + CoA = succinyl-CoA + ADP + phosphate. The enzyme catalyses GTP + succinate + CoA = succinyl-CoA + GDP + phosphate. It functions in the pathway carbohydrate metabolism; tricarboxylic acid cycle; succinate from succinyl-CoA (ligase route): step 1/1. In terms of biological role, succinyl-CoA synthetase functions in the citric acid cycle (TCA), coupling the hydrolysis of succinyl-CoA to the synthesis of either ATP or GTP and thus represents the only step of substrate-level phosphorylation in the TCA. The beta subunit provides nucleotide specificity of the enzyme and binds the substrate succinate, while the binding sites for coenzyme A and phosphate are found in the alpha subunit. The protein is Succinate--CoA ligase [ADP-forming] subunit beta of Polynucleobacter necessarius subsp. necessarius (strain STIR1).